Reading from the N-terminus, the 302-residue chain is Oxygen-dependent coproporphyrinogen-III oxidase (302 aa).

S94 serves as a coordination point for substrate. A divalent metal cation is bound by residues H98 and H108. H108 serves as the catalytic Proton donor. 110 to 112 (NVR) serves as a coordination point for substrate. H147 and H177 together coordinate a divalent metal cation. The important for dimerization stretch occupies residues 242-277 (YVEFNLVWDRGTLFGLQTGGRTESILMSMPPLVRWE). Residue 260 to 262 (GGR) participates in substrate binding.

Belongs to the aerobic coproporphyrinogen-III oxidase family. In terms of assembly, homodimer. A divalent metal cation serves as cofactor.

The protein localises to the cytoplasm. The enzyme catalyses coproporphyrinogen III + O2 + 2 H(+) = protoporphyrinogen IX + 2 CO2 + 2 H2O. It functions in the pathway porphyrin-containing compound metabolism; protoporphyrin-IX biosynthesis; protoporphyrinogen-IX from coproporphyrinogen-III (O2 route): step 1/1. Involved in the heme biosynthesis. Catalyzes the aerobic oxidative decarboxylation of propionate groups of rings A and B of coproporphyrinogen-III to yield the vinyl groups in protoporphyrinogen-IX. This is Oxygen-dependent coproporphyrinogen-III oxidase from Erwinia tasmaniensis (strain DSM 17950 / CFBP 7177 / CIP 109463 / NCPPB 4357 / Et1/99).